The following is a 387-amino-acid chain: Exodeoxyribonuclease 7 large subunit (387 aa).

This sequence belongs to the XseA family. Heterooligomer composed of large and small subunits.

The protein localises to the cytoplasm. It carries out the reaction Exonucleolytic cleavage in either 5'- to 3'- or 3'- to 5'-direction to yield nucleoside 5'-phosphates.. In terms of biological role, bidirectionally degrades single-stranded DNA into large acid-insoluble oligonucleotides, which are then degraded further into small acid-soluble oligonucleotides. This Campylobacter fetus subsp. fetus (strain 82-40) protein is Exodeoxyribonuclease 7 large subunit.